Reading from the N-terminus, the 334-residue chain is Spermidine synthase 1 (334 aa).

A compositionally biased stretch (basic and acidic residues) spans 1–16; the sequence is MDAKETSATDLKRPRE. The segment at 1–35 is disordered; that stretch reads MDAKETSATDLKRPREEDDNGGAATMETENGDQKK. The 238-residue stretch at 45–282 folds into the PABS domain; sequence PGWFSEMSPM…GVIGFMLCST (238 aa). Gln-76 contacts S-adenosyl 3-(methylsulfanyl)propylamine. Tyr-106 provides a ligand contact to putrescine. Residues Gln-107, Asp-131, Glu-151, 182-183, and Asp-201 each bind S-adenosyl 3-(methylsulfanyl)propylamine; that span reads DG. Asp-201 acts as the Proton acceptor in catalysis. Putrescine contacts are provided by residues 201 to 204 and Tyr-270; that span reads DSSD.

The protein belongs to the spermidine/spermine synthase family. Homotetramer and heterodimer. Component of a multiprotein complex. Interacts with SPMS and SPDSYN2.

The catalysed reaction is S-adenosyl 3-(methylsulfanyl)propylamine + putrescine = S-methyl-5'-thioadenosine + spermidine + H(+). The protein operates within amine and polyamine biosynthesis; spermidine biosynthesis; spermidine from putrescine: step 1/1. The polypeptide is Spermidine synthase 1 (SPDSYN1) (Arabidopsis thaliana (Mouse-ear cress)).